The chain runs to 72 residues: SRY-related protein AES4 (72 aa).

The segment at residues 1–69 (VKRPMNAFMV…KHMADYPDYK (69 aa)) is a DNA-binding region (HMG box).

The protein localises to the nucleus. The protein is SRY-related protein AES4 of Alligator mississippiensis (American alligator).